Reading from the N-terminus, the 224-residue chain is Urease accessory protein UreF (224 aa).

This sequence belongs to the UreF family. UreD, UreF and UreG form a complex that acts as a GTP-hydrolysis-dependent molecular chaperone, activating the urease apoprotein by helping to assemble the nickel containing metallocenter of UreC. The UreE protein probably delivers the nickel.

It localises to the cytoplasm. In terms of biological role, required for maturation of urease via the functional incorporation of the urease nickel metallocenter. The polypeptide is Urease accessory protein UreF (Pseudomonas entomophila (strain L48)).